A 335-amino-acid polypeptide reads, in one-letter code: MKRIAVLTSGGDAPGMNAAIRAVVRQAISEGMEVFGIYDGYAGMVAGEIHPLDAASVGDIISRGGTFLHSARYPEFAQLEGQLKGIEQLKKHGIEGVVVIGGDGSYHGAMRLTEHGFPAIGLPGTIDNDIVGTDFTIGFDTAVTTAMDAIDKIRDTSSSHRRTFVIEVMGRNAGDIALWAGIATGADEIIIPEAGFKMEDIVASIKAGYECGKKHNIIVLAEGVMSAAEFGQKLKEAGDTSDLRVTELGHIQRGGSPTARDRVLASRMGAHAVKLLKEGIGGVAVGIRNEKMVENPILGTAEEGALFSLTAEGKIVVNNPHKADIELSSLNKSLS.

Gly11 lines the ATP pocket. 21-25 (RAVVR) serves as a coordination point for ADP. ATP is bound by residues 72–73 (RY) and 102–105 (GDGS). Mg(2+) is bound at residue Asp103. 125-127 (TID) lines the substrate pocket. Asp127 acts as the Proton acceptor in catalysis. Residue Arg154 participates in ADP binding. Substrate-binding positions include Arg162 and 169-171 (MGR). ADP-binding positions include 185-187 (GAD) and 213-215 (KKH). Residues Glu222, Arg244, and 250–253 (HIQR) each bind substrate.

This sequence belongs to the phosphofructokinase type A (PFKA) family. ATP-dependent PFK group I subfamily. Prokaryotic clade 'B1' sub-subfamily. In terms of assembly, homotetramer. Mg(2+) serves as cofactor.

It is found in the cytoplasm. It catalyses the reaction beta-D-fructose 6-phosphate + ATP = beta-D-fructose 1,6-bisphosphate + ADP + H(+). It participates in carbohydrate degradation; glycolysis; D-glyceraldehyde 3-phosphate and glycerone phosphate from D-glucose: step 3/4. Its activity is regulated as follows. Allosterically activated by ADP and other diphosphonucleosides, and allosterically inhibited by phosphoenolpyruvate. Its function is as follows. Catalyzes the phosphorylation of D-fructose 6-phosphate to fructose 1,6-bisphosphate by ATP, the first committing step of glycolysis. The protein is ATP-dependent 6-phosphofructokinase of Streptococcus pneumoniae serotype 4 (strain ATCC BAA-334 / TIGR4).